The chain runs to 61 residues: U-scoloptoxin(14)-Sm1a (61 aa).

The signal sequence occupies residues 1 to 24 (MNPKLCMLLLVCLMAFYVIETVQA).

Belongs to the scoloptoxin-14 family. Post-translationally, contains 4 disulfide bonds. In terms of tissue distribution, expressed by the venom gland.

It localises to the secreted. This is U-scoloptoxin(14)-Sm1a from Scolopendra morsitans (Tanzanian blue ringleg centipede).